The sequence spans 453 residues: 3-phosphoshikimate 1-carboxyvinyltransferase (453 aa).

The interval M1–D27 is disordered. Residues K28, S29, and R33 each coordinate 3-phosphoshikimate. Residue K28 participates in phosphoenolpyruvate binding. G101 and R129 together coordinate phosphoenolpyruvate. Positions 175, 177, 330, and 357 each coordinate 3-phosphoshikimate. Q177 is a binding site for phosphoenolpyruvate. The Proton acceptor role is filled by D330. 2 residues coordinate phosphoenolpyruvate: R361 and R405.

This sequence belongs to the EPSP synthase family. Monomer.

The protein localises to the cytoplasm. It carries out the reaction 3-phosphoshikimate + phosphoenolpyruvate = 5-O-(1-carboxyvinyl)-3-phosphoshikimate + phosphate. The protein operates within metabolic intermediate biosynthesis; chorismate biosynthesis; chorismate from D-erythrose 4-phosphate and phosphoenolpyruvate: step 6/7. In terms of biological role, catalyzes the transfer of the enolpyruvyl moiety of phosphoenolpyruvate (PEP) to the 5-hydroxyl of shikimate-3-phosphate (S3P) to produce enolpyruvyl shikimate-3-phosphate and inorganic phosphate. The chain is 3-phosphoshikimate 1-carboxyvinyltransferase from Methylorubrum extorquens (strain CM4 / NCIMB 13688) (Methylobacterium extorquens).